The sequence spans 599 residues: Aspartate--tRNA ligase (599 aa).

Glu175 provides a ligand contact to L-aspartate. Positions 199–202 (QQFK) are aspartate. 2 residues coordinate L-aspartate: Arg221 and His446. Position 221–223 (221–223 (RDE)) interacts with ATP. ATP is bound at residue Glu480. Residue Arg487 participates in L-aspartate binding. 532–535 (GVDR) lines the ATP pocket.

The protein belongs to the class-II aminoacyl-tRNA synthetase family. Type 1 subfamily. In terms of assembly, homodimer.

The protein resides in the cytoplasm. The catalysed reaction is tRNA(Asp) + L-aspartate + ATP = L-aspartyl-tRNA(Asp) + AMP + diphosphate. Functionally, catalyzes the attachment of L-aspartate to tRNA(Asp) in a two-step reaction: L-aspartate is first activated by ATP to form Asp-AMP and then transferred to the acceptor end of tRNA(Asp). In Streptomyces griseus subsp. griseus (strain JCM 4626 / CBS 651.72 / NBRC 13350 / KCC S-0626 / ISP 5235), this protein is Aspartate--tRNA ligase.